Here is a 342-residue protein sequence, read N- to C-terminus: Holliday junction branch migration complex subunit RuvB (342 aa).

The tract at residues 1-179 (MTNILSPEKS…FGIPMRLNFY (179 aa)) is large ATPase domain (RuvB-L). Residues I18, R19, G60, K63, T64, T65, 126–128 (EDF), R169, Y179, and R216 each bind ATP. T64 is a Mg(2+) binding site. A small ATPAse domain (RuvB-S) region spans residues 180 to 250 (NTEELKKVLN…ISDFGLKRLE (71 aa)). A head domain (RuvB-H) region spans residues 253–342 (RIGLDSNDYR…HQFNIFNENE (90 aa)). 3 residues coordinate DNA: R289, R308, and R313.

This sequence belongs to the RuvB family. Homohexamer. Forms an RuvA(8)-RuvB(12)-Holliday junction (HJ) complex. HJ DNA is sandwiched between 2 RuvA tetramers; dsDNA enters through RuvA and exits via RuvB. An RuvB hexamer assembles on each DNA strand where it exits the tetramer. Each RuvB hexamer is contacted by two RuvA subunits (via domain III) on 2 adjacent RuvB subunits; this complex drives branch migration. In the full resolvosome a probable DNA-RuvA(4)-RuvB(12)-RuvC(2) complex forms which resolves the HJ.

Its subcellular location is the cytoplasm. The catalysed reaction is ATP + H2O = ADP + phosphate + H(+). Functionally, the RuvA-RuvB-RuvC complex processes Holliday junction (HJ) DNA during genetic recombination and DNA repair, while the RuvA-RuvB complex plays an important role in the rescue of blocked DNA replication forks via replication fork reversal (RFR). RuvA specifically binds to HJ cruciform DNA, conferring on it an open structure. The RuvB hexamer acts as an ATP-dependent pump, pulling dsDNA into and through the RuvAB complex. RuvB forms 2 homohexamers on either side of HJ DNA bound by 1 or 2 RuvA tetramers; 4 subunits per hexamer contact DNA at a time. Coordinated motions by a converter formed by DNA-disengaged RuvB subunits stimulates ATP hydrolysis and nucleotide exchange. Immobilization of the converter enables RuvB to convert the ATP-contained energy into a lever motion, pulling 2 nucleotides of DNA out of the RuvA tetramer per ATP hydrolyzed, thus driving DNA branch migration. The RuvB motors rotate together with the DNA substrate, which together with the progressing nucleotide cycle form the mechanistic basis for DNA recombination by continuous HJ branch migration. Branch migration allows RuvC to scan DNA until it finds its consensus sequence, where it cleaves and resolves cruciform DNA. The polypeptide is Holliday junction branch migration complex subunit RuvB (Rickettsia peacockii (strain Rustic)).